The following is a 37-amino-acid chain: Large ribosomal subunit protein bL36c (37 aa).

It belongs to the bacterial ribosomal protein bL36 family.

It is found in the plastid. It localises to the chloroplast. The protein is Large ribosomal subunit protein bL36c of Physcomitrium patens (Spreading-leaved earth moss).